The sequence spans 264 residues: Adenosylcobinamide-GDP ribazoletransferase (264 aa).

Transmembrane regions (helical) follow at residues 39-59 (IAYA…AILI), 63-83 (ALGL…VLLT), 121-141 (ACAL…LLAL), 148-168 (LALI…LEFL), 201-221 (LLIV…LSVL), and 241-261 (VAGA…LIYA).

The protein belongs to the CobS family. The cofactor is Mg(2+).

The protein resides in the cell inner membrane. The catalysed reaction is alpha-ribazole + adenosylcob(III)inamide-GDP = adenosylcob(III)alamin + GMP + H(+). The enzyme catalyses alpha-ribazole 5'-phosphate + adenosylcob(III)inamide-GDP = adenosylcob(III)alamin 5'-phosphate + GMP + H(+). Its pathway is cofactor biosynthesis; adenosylcobalamin biosynthesis; adenosylcobalamin from cob(II)yrinate a,c-diamide: step 7/7. In terms of biological role, joins adenosylcobinamide-GDP and alpha-ribazole to generate adenosylcobalamin (Ado-cobalamin). Also synthesizes adenosylcobalamin 5'-phosphate from adenosylcobinamide-GDP and alpha-ribazole 5'-phosphate. The polypeptide is Adenosylcobinamide-GDP ribazoletransferase (Azorhizobium caulinodans (strain ATCC 43989 / DSM 5975 / JCM 20966 / LMG 6465 / NBRC 14845 / NCIMB 13405 / ORS 571)).